We begin with the raw amino-acid sequence, 491 residues long: Glutamyl-tRNA(Gln) amidotransferase subunit A (491 aa).

Residues Lys-78 and Ser-158 each act as charge relay system in the active site. Ser-182 acts as the Acyl-ester intermediate in catalysis.

The protein belongs to the amidase family. GatA subfamily. As to quaternary structure, heterotrimer of A, B and C subunits.

It carries out the reaction L-glutamyl-tRNA(Gln) + L-glutamine + ATP + H2O = L-glutaminyl-tRNA(Gln) + L-glutamate + ADP + phosphate + H(+). Functionally, allows the formation of correctly charged Gln-tRNA(Gln) through the transamidation of misacylated Glu-tRNA(Gln) in organisms which lack glutaminyl-tRNA synthetase. The reaction takes place in the presence of glutamine and ATP through an activated gamma-phospho-Glu-tRNA(Gln). The chain is Glutamyl-tRNA(Gln) amidotransferase subunit A from Bradyrhizobium sp. (strain BTAi1 / ATCC BAA-1182).